Reading from the N-terminus, the 357-residue chain is DnaJ homolog subfamily C member 25 (357 aa).

Residues 19 to 39 (WLLLAPLLLVPLLVRPAEALV) form a helical membrane-spanning segment. One can recognise a J domain in the interval 48-121 (DCYEVLGVSR…ETRKDYDYML (74 aa)). 2 helical membrane passes run 147–167 (VVIL…WWNS) and 241–261 (LLLF…AWYC).

It belongs to the DNAJC25 family.

The protein resides in the membrane. The polypeptide is DnaJ homolog subfamily C member 25 (Dnajc25) (Rattus norvegicus (Rat)).